A 542-amino-acid chain; its full sequence is Quinidine resistance protein 2 (542 aa).

The Cytoplasmic portion of the chain corresponds to 1 to 67 (MAGATSSIIR…SFKTVLIAQC (67 aa)). Phosphoserine is present on Ser-21. A Phosphothreonine modification is found at Thr-38. Ser-40 is subject to Phosphoserine. A helical membrane pass occupies residues 68-88 (AFTGFFSTIAGAIYYPVLSVI). Over 89–100 (ERKFDIDEELVN) the chain is Extracellular. Residues 101 to 121 (VTVVVYFVFQGLAPTFMGGFA) form a helical membrane-spanning segment. The Cytoplasmic segment spans residues 122-127 (DSLGRR). A helical membrane pass occupies residues 128–148 (PVVLVAIVIYFGACIGLACAQ). Residue Thr-149 is a topological domain, extracellular. The helical transmembrane segment at 150–170 (YAQIIVLRCLQAAGISPVIAI) threads the bilayer. Residues 171–187 (NSGIMGDVTTRAERGGY) are Cytoplasmic-facing. The chain crosses the membrane as a helical span at residues 188–208 (VGYVAGFQVLGSAFGALIGAG). Over 209 to 216 (LSSRWGWR) the chain is Extracellular. Residues 217-237 (AIFWFLAIGSGICFLASFLIL) form a helical membrane-spanning segment. Residues 238 to 300 (PETKRNISGN…APFKILKAYE (63 aa)) are Cytoplasmic-facing. Residues 301 to 321 (ICILMLVAGLQFAMYTTHLTA) form a helical membrane-spanning segment. Topologically, residues 322-333 (LSTALSKQYHLT) are extracellular. Residues 334–354 (VAKVGLCYLPSGICTLCSIVI) traverse the membrane as a helical segment. Residues 355–413 (AGRYLNWNYRRRLKYYQNWLGKKRSKLLEEHDNDLNLVQRIIENDPKYTFNIFKARLQP) are Cytoplasmic-facing. The chain crosses the membrane as a helical span at residues 414–434 (AFVTLLLSSSGFCAYGWCITV). Residues 435 to 437 (KAP) lie on the Extracellular side of the membrane. Residues 438-458 (LAAVLCMSGFASLFSNCILTF) form a helical membrane-spanning segment. At 459–472 (STTLIVDLFPTKTS) the chain is on the cytoplasmic side. The helical transmembrane segment at 473–493 (TATGCLNLFRCILSAVFIAAL) threads the bilayer. Residues 494-503 (SKMVEKMKFG) lie on the Extracellular side of the membrane. A helical transmembrane segment spans residues 504 to 524 (GVFTFLGALTSSSSILLFILL). The Cytoplasmic segment spans residues 525-542 (RKGKELAFKRKKQELGVN).

Belongs to the major facilitator superfamily. CAR1 family.

The protein localises to the cell membrane. Its function is as follows. Multidrug resistance transporter involved in resistance and adaptation to quinidine and to the herbicide barban (4-chloro-2-butynyl [3-chlorophenyl] carbamate). Implicated in potassium uptake. This Saccharomyces cerevisiae (strain ATCC 204508 / S288c) (Baker's yeast) protein is Quinidine resistance protein 2 (QDR2).